The chain runs to 240 residues: Methylthioribulose-1-phosphate dehydratase (240 aa).

Polar residues predominate over residues 1-17 (MAQEVENNNNDHLVQSS). The tract at residues 1-20 (MAQEVENNNNDHLVQSSDPE) is disordered. Residue Cys100 coordinates substrate. Residues His117 and His119 each contribute to the Zn(2+) site. Glu146 functions as the Proton donor/acceptor in the catalytic mechanism. A Zn(2+)-binding site is contributed by His202.

The protein belongs to the aldolase class II family. MtnB subfamily. Requires Zn(2+) as cofactor.

It localises to the cytoplasm. The catalysed reaction is 5-(methylsulfanyl)-D-ribulose 1-phosphate = 5-methylsulfanyl-2,3-dioxopentyl phosphate + H2O. Its pathway is amino-acid biosynthesis; L-methionine biosynthesis via salvage pathway; L-methionine from S-methyl-5-thio-alpha-D-ribose 1-phosphate: step 2/6. Its function is as follows. Catalyzes the dehydration of methylthioribulose-1-phosphate (MTRu-1-P) into 2,3-diketo-5-methylthiopentyl-1-phosphate (DK-MTP-1-P). This is Methylthioribulose-1-phosphate dehydratase from Neosartorya fischeri (strain ATCC 1020 / DSM 3700 / CBS 544.65 / FGSC A1164 / JCM 1740 / NRRL 181 / WB 181) (Aspergillus fischerianus).